A 328-amino-acid polypeptide reads, in one-letter code: Eukaryotic translation initiation factor 3 subunit I (328 aa).

WD repeat units follow at residues 8–47 (GHER…RLGT), 50–91 (GHQG…GTIP), 148–187 (SIQT…ELNS), 190–229 (DHTG…CLKT), and 287–328 (GHFG…FVFE).

It belongs to the eIF-3 subunit I family. Component of the eukaryotic translation initiation factor 3 (eIF-3) complex.

Its subcellular location is the cytoplasm. In terms of biological role, component of the eukaryotic translation initiation factor 3 (eIF-3) complex, which is involved in protein synthesis of a specialized repertoire of mRNAs and, together with other initiation factors, stimulates binding of mRNA and methionyl-tRNAi to the 40S ribosome. The eIF-3 complex specifically targets and initiates translation of a subset of mRNAs involved in cell proliferation. The chain is Eukaryotic translation initiation factor 3 subunit I from Culex quinquefasciatus (Southern house mosquito).